The primary structure comprises 472 residues: Transmembrane protein 8B (472 aa).

The disordered stretch occupies residues 1–37 (MNMPQSLGNQPLPPEPPSLRTPAEGPGATSPPEHCWP). The Extracellular portion of the chain corresponds to 1-233 (MNMPQSLGNQ…ADALTYGFQL (233 aa)). N-linked (GlcNAc...) asparagine glycans are attached at residues Asn92 and Asn100. One can recognise an EGF-like domain in the interval 182–221 (FLSPCVDDCGPYGQCKLLRTHNYLYAACECKAGWRGWGCT). 3 disulfide bridges follow: Cys186–Cys196, Cys190–Cys209, and Cys211–Cys220. The chain crosses the membrane as a helical span at residues 234–254 (LSTLLLCLSNLMFLPPVVLAI). Over 255-257 (RSR) the chain is Cytoplasmic. The chain crosses the membrane as a helical span at residues 258–277 (YVLEAAVYTFTMFFSTFYHA). At 278–292 (CDQPGIVVFCIMDYD) the chain is on the extracellular side. The helical transmembrane segment at 293–313 (VLQFCDFLGSLMSVWVTVIAM) threads the bilayer. Residues 314–315 (AR) are Cytoplasmic-facing. The helical transmembrane segment at 316-336 (LQPVVKQVLYLLGAMLLSMAL) threads the bilayer. Residues 337–342 (QLDRHG) are Extracellular-facing. The chain crosses the membrane as a helical span at residues 343-363 (LWNLLGPSLFALGILATAWTV). The Cytoplasmic portion of the chain corresponds to 364 to 379 (RSVRRRHCYPPTWRRW). A helical transmembrane segment spans residues 380 to 400 (LFCLCPGSLIAGSAILLYAFV). Topologically, residues 401–405 (ETRDN) are extracellular. A helical transmembrane segment spans residues 406–426 (YFYIHSIWHMLIAGSVGFLLP). The Cytoplasmic segment spans residues 427–472 (PRAKTDRRVPSGARARGCGYQLCINEQEELGLVGPGGATVSSICAS).

It belongs to the TMEM8 family. In terms of assembly, may interact with EZR. In terms of processing, N-glycosylated.

Its subcellular location is the cell membrane. The protein localises to the cytoplasm. It is found in the nucleus. It localises to the mitochondrion. The protein resides in the endoplasmic reticulum. Its function is as follows. May function as a regulator of the EGFR pathway. Probable tumor suppressor which may function in cell growth, proliferation and adhesion. This chain is Transmembrane protein 8B (TMEM8B), found in Bos taurus (Bovine).